The sequence spans 572 residues: Hemagglutinin-neuraminidase (572 aa).

The Intravirion segment spans residues 1 to 31 (MEYWKHTNHGKDAGNELETSMATHGNKLTNK). A helical membrane pass occupies residues 32–52 (IIYILWTIILVLLSIVFIIVL). Over 53-572 (INSIKSEKAH…FKTEIPKSCS (520 aa)) the chain is Virion surface. 2 disulfides stabilise this stretch: cysteine 190–cysteine 214 and cysteine 256–cysteine 269. The involved in neuraminidase activity stretch occupies residues 252–257 (NRKSCS). N-linked (GlcNAc...) asparagine; by host glycosylation is found at asparagine 308 and asparagine 351. Intrachain disulfides connect cysteine 355-cysteine 469 and cysteine 463-cysteine 473. A glycan (N-linked (GlcNAc...) asparagine; by host) is linked at asparagine 523. A disulfide bridge connects residues cysteine 535 and cysteine 544.

Belongs to the paramyxoviruses hemagglutinin-neuraminidase family. As to quaternary structure, homotetramer; composed of disulfide-linked homodimers. Interacts with F protein trimer.

It is found in the virion membrane. The protein resides in the host cell membrane. The enzyme catalyses Hydrolysis of alpha-(2-&gt;3)-, alpha-(2-&gt;6)-, alpha-(2-&gt;8)- glycosidic linkages of terminal sialic acid residues in oligosaccharides, glycoproteins, glycolipids, colominic acid and synthetic substrates.. Functionally, attaches the virus to sialic acid-containing cell receptors and thereby initiating infection. Binding of HN protein to the receptor induces a conformational change that allows the F protein to trigger virion/cell membranes fusion. In terms of biological role, neuraminidase activity ensures the efficient spread of the virus by dissociating the mature virions from the neuraminic acid containing glycoproteins. The protein is Hemagglutinin-neuraminidase (HN) of Homo sapiens (Human).